Reading from the N-terminus, the 976-residue chain is Ephrin type-A receptor 2 (976 aa).

Residues 1–23 (MELWAARACFVLLWGCALAPATA) form the signal peptide. Positions 1-206 (MELWAARACF…YYKKCPELLQ (206 aa)) are mediates interaction with CLDN4. The Extracellular segment spans residues 25–537 (QGKEVVLLDF…SPEGSGSLAV (513 aa)). The Eph LBD domain occupies 28 to 206 (EVVLLDFAAA…YYKKCPELLQ (179 aa)). Cystine bridges form between Cys-70–Cys-188 and Cys-105–Cys-115. A Fibronectin type-III 1 domain is found at 328-432 (PPSAPHYLTA…TSRSFRTASV (105 aa)). Asn-407 and Asn-435 each carry an N-linked (GlcNAc...) asparagine glycan. One can recognise a Fibronectin type-III 2 domain in the interval 438–529 (EPPKVRLEGR…KVHEFQTLSP (92 aa)). Residues 538–558 (IGGVAVCVVLLLLLAGAGFFI) traverse the membrane as a helical segment. At 559-976 (HRRRKNLRAR…DQVNTVGIPI (418 aa)) the chain is on the cytoplasmic side. Ser-570 bears the Phosphoserine mark. Position 575 is a phosphotyrosine (Tyr-575). Ser-579 is subject to Phosphoserine. Tyr-588 bears the Phosphotyrosine; by autocatalysis mark. The residue at position 594 (Tyr-594) is a Phosphotyrosine. The interval 606-906 (TEIHPSCVTR…STSGSEGVPF (301 aa)) is mediates interaction with ARHGEF16. The Protein kinase domain maps to 613 to 875 (VTRQKVIGAG…DIVSILDKLI (263 aa)). Position 619–627 (619–627 (IGAGEFGEV)) interacts with ATP. The residue at position 628 (Tyr-628) is a Phosphotyrosine. Lys-646 serves as a coordination point for ATP. Thr-647 bears the Phosphothreonine mark. The residue at position 735 (Tyr-735) is a Phosphotyrosine; by autocatalysis. Residue Asp-739 is the Proton acceptor of the active site. Tyr-772 bears the Phosphotyrosine mark. Phosphoserine is present on residues Ser-869, Ser-892, Ser-897, and Ser-901. Residues 886–976 (DFDPRVSIRL…DQVNTVGIPI (91 aa)) are negatively regulates interaction with ARHGEF16. The region spanning 904–968 (VPFRTVSEWL…AYSLLGLKDQ (65 aa)) is the SAM domain. Tyr-921 carries the post-translational modification Phosphotyrosine; by autocatalysis. Tyr-930 carries the post-translational modification Phosphotyrosine. Residues 974–976 (IPI) carry the PDZ-binding motif.

It belongs to the protein kinase superfamily. Tyr protein kinase family. Ephrin receptor subfamily. As to quaternary structure, homodimer. Interacts with SLA. Interacts (phosphorylated form) with VAV2, VAV3 and PI3-kinase p85 subunit (PIK3R1, PIK3R2 or PIK3R3); critical for the EFNA1-induced activation of RAC1 which stimulates cell migration. Interacts with INPPL1; regulates activated EPHA2 endocytosis and degradation. Interacts (inactivated form) with PTK2/FAK1 and interacts (EFNA1 ligand-activated form) with PTPN11; regulates integrin-mediated adhesion. Interacts with ARHGEF16, DOCK4 and ELMO2; mediates ligand-independent activation of RAC1 which stimulates cell migration. Interacts with CLDN4; phosphorylates CLDN4 and may regulate tight junctions. Interacts with ACP1. Interacts with ANKS1A. Interacts with CEMIP. Interacts with NCK1; may regulate EPHA2 activity in cell migration and adhesion. Interacts with TIMD4. Post-translationally, autophosphorylates. Phosphorylated on tyrosine upon binding and activation by EFNA1. Phosphorylated residues Tyr-588 and Tyr-594 are required for binding VAV2 and VAV3 while phosphorylated residues Tyr-735 and Tyr-930 are required for binding PI3-kinase p85 subunit (PIK3R1, PIK3R2 or PIK3R3). These phosphorylated residues are critical for recruitment of VAV2 and VAV3 and PI3-kinase p85 subunit which transduce downstream signaling to activate RAC1 GTPase and cell migration. Dephosphorylation of Tyr-930 by PTPRF prevents the interaction of EPHA2 with NCK1. Phosphorylated at Ser-897 by PKB; serum-induced phosphorylation which targets EPHA2 to the cell leading edge and stimulates cell migration. Phosphorylation by PKB is inhibited by EFNA1-activated EPHA2 which regulates PKB activity via a reciprocal regulatory loop. Phosphorylated at Ser-897 in response to TNF by RPS6KA1 and RPS6KA3; RPS6KA-EPHA2 signaling pathway controls cell migration. Phosphorylated at Ser-897 by PKA; blocks cell retraction induced by EPHA2 kinase activity. Dephosphorylated by ACP1. In terms of processing, ubiquitinated by CHIP/STUB1. Ubiquitination is regulated by the HSP90 chaperone and regulates the receptor stability and activity through proteasomal degradation. ANKS1A prevents ubiquitination and degradation.

The protein resides in the cell membrane. The protein localises to the cell projection. It localises to the ruffle membrane. Its subcellular location is the lamellipodium membrane. It is found in the cell junction. The protein resides in the focal adhesion. The enzyme catalyses L-tyrosyl-[protein] + ATP = O-phospho-L-tyrosyl-[protein] + ADP + H(+). Functionally, receptor tyrosine kinase which binds promiscuously membrane-bound ephrin-A family ligands residing on adjacent cells, leading to contact-dependent bidirectional signaling into neighboring cells. The signaling pathway downstream of the receptor is referred to as forward signaling while the signaling pathway downstream of the ephrin ligand is referred to as reverse signaling. Activated by the ligand ephrin-A1/EFNA1 regulates migration, integrin-mediated adhesion, proliferation and differentiation of cells. Regulates cell adhesion and differentiation through DSG1/desmoglein-1 and inhibition of the ERK1/ERK2 signaling pathway. May also participate in UV radiation-induced apoptosis and have a ligand-independent stimulatory effect on chemotactic cell migration. During development, may function in distinctive aspects of pattern formation and subsequently in development of several fetal tissues. Involved for instance in angiogenesis, in early hindbrain development and epithelial proliferation and branching morphogenesis during mammary gland development. Engaged by the ligand ephrin-A5/EFNA5 may regulate lens fiber cells shape and interactions and be important for lens transparency development and maintenance. With ephrin-A2/EFNA2 may play a role in bone remodeling through regulation of osteoclastogenesis and osteoblastogenesis. This chain is Ephrin type-A receptor 2 (EPHA2), found in Macaca fascicularis (Crab-eating macaque).